The chain runs to 136 residues: Large ribosomal subunit protein bL17 (136 aa).

The protein belongs to the bacterial ribosomal protein bL17 family. In terms of assembly, part of the 50S ribosomal subunit. Contacts protein L32.

This Rhodopseudomonas palustris (strain BisA53) protein is Large ribosomal subunit protein bL17.